The following is a 471-amino-acid chain: Ubiquitin carboxyl-terminal hydrolase calypso (471 aa).

The UCH catalytic domain maps to G45–P276. The active-site Nucleophile is the C131. H213 functions as the Proton donor in the catalytic mechanism. A disordered region spans residues D307–L326. A compositionally biased stretch (polar residues) spans N314–L326. Positions N375–P403 constitute a ULD domain. The tract at residues K405–K471 is positively charged C-terminal tail required for binding nucleosomes. The interval A412–K471 is disordered. Residues T422–A447 are compositionally biased toward low complexity. A compositionally biased stretch (basic residues) spans P457 to K471.

Belongs to the peptidase C12 family. BAP1 subfamily. In terms of assembly, catalytic component of the polycomb repressive deubiquitinase (PR-DUB) complex, at least composed of caly/calypso, Asx and sba (MBD5/6 homolog). The PR-DUB complex associates with nucleosomes to mediate deubiquitination of histone H2AK118ub1 substrates; the association requires the positively charged C-terminal tail of caly, probably due to direct binding of DNA. Interacts (via ULD domain) with Asx (via DEUBAD domain); the interaction produces a stable heterodimer with a composite binding site for ubiquitin. Homodimerizes (via coiled-coil hinge-region between the UCH and ULD domains) to mediate assembly of 2 copies of the caly-Asx heterodimer into a bisymmetric tetramer; dimerization enhances PR-DUB association with nucleosomes.

Its subcellular location is the nucleus. The catalysed reaction is Thiol-dependent hydrolysis of ester, thioester, amide, peptide and isopeptide bonds formed by the C-terminal Gly of ubiquitin (a 76-residue protein attached to proteins as an intracellular targeting signal).. Its function is as follows. Catalytic component of the polycomb repressive deubiquitinase (PR-DUB) complex, a complex that specifically mediates deubiquitination of histone H2A monoubiquitinated at 'Lys-119' (H2AK118ub1). Mediates bisymmetric organization of the PR-DUB complex and is involved in association with nucleosomes to mediate deubiquitination. Does not deubiquitinate monoubiquitinated histone H2B. Required to maintain the transcriptionally repressive state of homeotic genes throughout development. The PR-DUB complex has weak or no activity toward 'Lys-48'- and 'Lys-63'-linked polyubiquitin chains. Polycomb group (PcG) protein. The protein is Ubiquitin carboxyl-terminal hydrolase calypso of Drosophila sechellia (Fruit fly).